A 520-amino-acid polypeptide reads, in one-letter code: UBX domain-containing protein 11 (520 aa).

The tract at residues 1 to 26 (MSSPLASLSKTRKVPLPSEPMNPGRR) is disordered. A coiled-coil region spans residues 76–149 (MAFMTRKLWD…VREMERFLSD (74 aa)). The region spanning 230–294 (LEPIPLKLYR…VSDLRNQVYL (65 aa)) is the SEP domain. A UBX domain is found at 392-469 (PAPPLSMLRI…GLVPKAALLL (78 aa)). Residues 476–520 (KSSLKFSPGPCPGPGPGPSPGPGPGPSPGPGPGPSPCPGPSPSPQ) form a disordered region. Pro residues predominate over residues 484–520 (GPCPGPGPGPSPGPGPGPSPGPGPGPSPCPGPSPSPQ). 3 repeat units span residues 487-494 (PGPGPGPS), 495-502 (PGPGPGPS), and 503-510 (PGPGPGPS). Residues 487–510 (PGPGPGPSPGPGPGPSPGPGPGPS) form a 3 X 8 AA tandem repeats of P-G-P-G-P-G-P-S region.

Interacts with GNA12, GNA13, RND1, RND2 and RND3.

It is found in the cytoplasm. The protein resides in the cytoskeleton. In terms of biological role, may be involved in the reorganization of actin cytoskeleton mediated by RND1, RND2 and RND3. Promotes RHOA activation mediated by GNA12 and GNA13. In Homo sapiens (Human), this protein is UBX domain-containing protein 11 (UBXN11).